Reading from the N-terminus, the 330-residue chain is Ferredoxin--NADP reductase (330 aa).

The FAD site is built by Glu-35, Gln-43, Tyr-48, Val-90, Phe-123, Asp-285, and Thr-326.

This sequence belongs to the ferredoxin--NADP reductase type 2 family. Homodimer. FAD is required as a cofactor.

It carries out the reaction 2 reduced [2Fe-2S]-[ferredoxin] + NADP(+) + H(+) = 2 oxidized [2Fe-2S]-[ferredoxin] + NADPH. This is Ferredoxin--NADP reductase from Streptococcus agalactiae serotype Ia (strain ATCC 27591 / A909 / CDC SS700).